The primary structure comprises 274 residues: Triosephosphate isomerase (274 aa).

Asparagine 13–lysine 15 is a binding site for substrate. Histidine 98 serves as the catalytic Electrophile. Catalysis depends on glutamate 170, which acts as the Proton acceptor. Residues glycine 176 and serine 216 each contribute to the substrate site.

Belongs to the triosephosphate isomerase family. As to quaternary structure, homodimer.

It localises to the cytoplasm. It catalyses the reaction D-glyceraldehyde 3-phosphate = dihydroxyacetone phosphate. The protein operates within carbohydrate biosynthesis; gluconeogenesis. It functions in the pathway carbohydrate degradation; glycolysis; D-glyceraldehyde 3-phosphate from glycerone phosphate: step 1/1. Involved in the gluconeogenesis. Catalyzes stereospecifically the conversion of dihydroxyacetone phosphate (DHAP) to D-glyceraldehyde-3-phosphate (G3P). The protein is Triosephosphate isomerase of Aster yellows witches'-broom phytoplasma (strain AYWB).